Reading from the N-terminus, the 270-residue chain is Sugar phosphatase YidA (270 aa).

Asp-9 acts as the Nucleophile in catalysis. Residue Asp-9 coordinates Mg(2+). Residue Met-10 coordinates phosphate. Asp-11 contacts Mg(2+). Phosphate is bound by residues 43-44 and Lys-197; that span reads TG. A Mg(2+)-binding site is contributed by Asp-220. Residue Asn-223 coordinates phosphate.

It belongs to the HAD-like hydrolase superfamily. Cof family. As to quaternary structure, homodimer. Requires Mg(2+) as cofactor.

It catalyses the reaction sugar phosphate + H2O = sugar + phosphate.. In terms of biological role, catalyzes the dephosphorylation of different sugar phosphates. The protein is Sugar phosphatase YidA (yidA) of Escherichia coli O6:H1 (strain CFT073 / ATCC 700928 / UPEC).